Here is a 548-residue protein sequence, read N- to C-terminus: Chaperonin GroEL (548 aa).

ATP contacts are provided by residues T30–P33, K51, D87–T91, G415, N479–A481, and D495. Residues R526 to M548 form a disordered region. The span at G539–M548 shows a compositional bias: gly residues.

This sequence belongs to the chaperonin (HSP60) family. As to quaternary structure, forms a cylinder of 14 subunits composed of two heptameric rings stacked back-to-back. Interacts with the co-chaperonin GroES.

Its subcellular location is the cytoplasm. The catalysed reaction is ATP + H2O + a folded polypeptide = ADP + phosphate + an unfolded polypeptide.. Its function is as follows. Together with its co-chaperonin GroES, plays an essential role in assisting protein folding. The GroEL-GroES system forms a nano-cage that allows encapsulation of the non-native substrate proteins and provides a physical environment optimized to promote and accelerate protein folding. The protein is Chaperonin GroEL of Buchnera aphidicola subsp. Schizaphis graminum (strain Sg).